Consider the following 149-residue polypeptide: UPF0310 protein msl3206 (149 aa).

The protein belongs to the UPF0310 family.

The polypeptide is UPF0310 protein msl3206 (Mesorhizobium japonicum (strain LMG 29417 / CECT 9101 / MAFF 303099) (Mesorhizobium loti (strain MAFF 303099))).